Reading from the N-terminus, the 241-residue chain is Probable transcriptional regulatory protein lin1570 (241 aa).

Residues 1-14 (MAGHSKWNNIQGRK) are compositionally biased toward polar residues. The disordered stretch occupies residues 1-22 (MAGHSKWNNIQGRKNAQDSKRS).

It belongs to the TACO1 family.

It localises to the cytoplasm. The chain is Probable transcriptional regulatory protein lin1570 from Listeria innocua serovar 6a (strain ATCC BAA-680 / CLIP 11262).